Consider the following 414-residue polypeptide: MDMHCKADPFSAMHRHGGVNQLGGVFVNGRPLPDVVRQRIVELAHQGVRPCDISRQLRVSHGCVSKILGRYYETGSIKPGVIGGSKPKVATPKVVDKIAEYKRQNPTMFAWEIRDRLLAEGICDNDTVPSVSSINRIIRTKVQQPFHPTPDGAGTGVTAPGHTIVPSTASPPVSSASNDPVGSYSINGILGIPRSNGEKRKREEVEVYTDPAHIRGGGGLHLVWTLRDVSEGSVPNGDSQSGVDSLRKHLRADTFTQQQLEALDRVFERPSYPDVFQASEHIKSEQGNEYSLPALTPGLDEVKSSLSASANPELGSNVSGTQTYPVVTGRDMTSTTLPGYPPHVPPTGQGSYPTSTLAGMVPGSEFSGNPYSHPQYTAYNEAWRFSNPALLSSPYYYSAAPRGSAPAAAAYDRH.

The paired DNA-binding region spans 15-141; that stretch reads RHGGVNQLGG…SSINRIIRTK (127 aa). The segment at 18-74 is PAI subdomain; sequence GVNQLGGVFVNGRPLPDVVRQRIVELAHQGVRPCDISRQLRVSHGCVSKILGRYYET. Residues 93-141 are RED subdomain; the sequence is KVVDKIAEYKRQNPTMFAWEIRDRLLAEGICDNDTVPSVSSINRIIRTK. Threonine 225 bears the Phosphothreonine mark.

Interacts with ELGN3; the interaction targets PAX2 for destruction. Interacts with TLE4. In terms of tissue distribution, kidney and nephrogenic rests.

It localises to the nucleus. Its function is as follows. Transcription factor that may have a role in kidney cell differentiation. The polypeptide is Paired box protein Pax-2 (Pax2) (Mus musculus (Mouse)).